We begin with the raw amino-acid sequence, 182 residues long: uncharacterized protein (182 aa).

Residues 17–34 (LSLVLFAVLSVLPLGGCA) traverse the membrane as a helical segment. TPR repeat units follow at residues 89–122 (VDAAIRLTKALVAQKRPHEALQVLDNVLVVTPDN) and 123–156 (LRALNAKAVILDIEGRHDAAQELYRQALETNPEN).

Its subcellular location is the membrane. This is an uncharacterized protein from Sinorhizobium fredii (strain NBRC 101917 / NGR234).